Here is a 395-residue protein sequence, read N- to C-terminus: S-adenosylmethionine synthase (395 aa).

His18 serves as a coordination point for ATP. Asp20 contacts Mg(2+). K(+) is bound at residue Glu46. Glu59 and Gln103 together coordinate L-methionine. The flexible loop stretch occupies residues 103–113 (QSADIAVGVDS). ATP contacts are provided by residues 170-172 (DAK), Asp244, 250-251 (RK), Ala267, and Lys271. Asp244 contributes to the L-methionine binding site. L-methionine is bound at residue Lys275.

The protein belongs to the AdoMet synthase family. As to quaternary structure, homotetramer; dimer of dimers. The cofactor is Mg(2+). K(+) serves as cofactor.

It is found in the cytoplasm. It carries out the reaction L-methionine + ATP + H2O = S-adenosyl-L-methionine + phosphate + diphosphate. The protein operates within amino-acid biosynthesis; S-adenosyl-L-methionine biosynthesis; S-adenosyl-L-methionine from L-methionine: step 1/1. Its function is as follows. Catalyzes the formation of S-adenosylmethionine (AdoMet) from methionine and ATP. The overall synthetic reaction is composed of two sequential steps, AdoMet formation and the subsequent tripolyphosphate hydrolysis which occurs prior to release of AdoMet from the enzyme. In Gluconacetobacter diazotrophicus (strain ATCC 49037 / DSM 5601 / CCUG 37298 / CIP 103539 / LMG 7603 / PAl5), this protein is S-adenosylmethionine synthase.